The following is a 375-amino-acid chain: MSTTGQVIRCKAAILWKPGAPFSIEEVEVAPPKAKEVRIKVVATGLCGTEMKVLGSKHLDLLYPTILGHEGAGIVESIGEGVSTVKPGDKVITLFLPQCGECTSCLNSEGNFCIQFKQSETQLMSDGTSRFTCKGKSIYHFGNTSTFCEYTVIKEISVAKIDAVAPLEKVCLISCGFSTGFGAAINTAKVTPGSTCAVFGLGGVGSSVVMGCKAAGATRIIGVDVNKEKFKKARELGATECLNPQDLKKPIQEVLFDMTDAGIDFCFEAIGNLDVLAAALASCNESYGVCVVVGLLPASVQLKISGQLFFSGRSLKGSVFGGWKSRQHIPKLVADYMAKKLNLDPLITHTLNLDKINEAVELMKTGKCIRCILLL.

Serine 23 carries the phosphoserine modification. Positions 47, 69, 99, 102, 105, 113, and 175 each coordinate Zn(2+). Residues 200 to 205, aspartate 224, lysine 229, 293 to 295, and arginine 370 each bind NAD(+); these read GLGGVG and VGL.

It belongs to the zinc-containing alcohol dehydrogenase family. Class-V subfamily. In terms of assembly, dimer. It depends on Zn(2+) as a cofactor.

The protein localises to the cytoplasm. It carries out the reaction a primary alcohol + NAD(+) = an aldehyde + NADH + H(+). It catalyses the reaction a secondary alcohol + NAD(+) = a ketone + NADH + H(+). Its function is as follows. Alcohol dehydrogenase. Catalyzes the NAD-dependent oxidation of primary alcohols to the corresponding aldehydes. Oxidizes secondary alcohols to the corresponding ketones. This Pongo abelii (Sumatran orangutan) protein is Alcohol dehydrogenase 6 (ADH6).